The chain runs to 527 residues: MQYNGKSQQSINKINCIIEKNQSNSIINKFQVASPYDDYDDRLNFLETIEKNSGFYNVLCELFLPNGYPDSVTTDYFGYQFWDSIQALCSTITGTLATRAILKGYGVGDSSATVASATTQWLIRDGMGMIGRIVFAWRKGTDLDCNSKKWRYTADILNNIGMAFEMISPLFSSQLFLPLSCIGLIAKSICGVAGGCTKASLTQHFAKRDNLADVSAKDGSQETAVNLVGMLLSVIVSSFINDNTSLIVTWLVFLFFTSLHLFCNYRAVSAVQLKSINRYRAYLIYDYFIHNQGSIPSPSEISKLENILFSIKELDIRVGVSLCNIYKVQQKQQKLNNQFLQQKLNNITKTKNVNNNNNNNNNNNNNNNNNNNNKNNNINNINNNINNNINNNINNNINNKNNNNNNNNNNNNNNNNNNNNNNNNNKNSLEIIKKIKKSKSFIIWKKHSQRGNKILEKDFTLLIALLNGSTTRDMIESYFYAVEYFHLSSVQIPPTINISGTFFKRLEEKGWDLDRALLNSEGWTFGI.

N21 carries N-linked (GlcNAc...) asparagine glycosylation. Residues 220-240 (SQETAVNLVGMLLSVIVSSFI) form a helical membrane-spanning segment. N243 carries an N-linked (GlcNAc...) asparagine glycan. A helical transmembrane segment spans residues 245 to 265 (SLIVTWLVFLFFTSLHLFCNY). N-linked (GlcNAc...) asparagine glycosylation is present at N346. Positions 350–426 (TKNVNNNNNN…NNNNNNNNNK (77 aa)) are disordered. N-linked (GlcNAc...) asparagine glycans are attached at residues N467 and N497.

Belongs to the RUS1 family.

The protein localises to the membrane. This Dictyostelium discoideum (Social amoeba) protein is RUS family member 1 (rusf1).